A 250-amino-acid chain; its full sequence is Cell division protein ZapD (250 aa).

Belongs to the ZapD family. Interacts with FtsZ.

The protein resides in the cytoplasm. Functionally, cell division factor that enhances FtsZ-ring assembly. Directly interacts with FtsZ and promotes bundling of FtsZ protofilaments, with a reduction in FtsZ GTPase activity. In Pectobacterium carotovorum subsp. carotovorum (strain PC1), this protein is Cell division protein ZapD.